We begin with the raw amino-acid sequence, 562 residues long: Arylsulfatase H (562 aa).

Ca(2+) is bound by residues D15, D16, and C55. Catalysis depends on C55, which acts as the Nucleophile. C55 is modified (3-oxoalanine (Cys)). Position 115 (K115) interacts with substrate. The active site involves H117. Helical transmembrane passes span 167–187 (LWISTVALALVPFLLLIPKFA) and 189–209 (WFSVPWKVIFVFALLAFLFFT). H271 serves as a coordination point for substrate. Residues D323 and N324 each contribute to the Ca(2+) site. Substrate is bound at residue K348.

It belongs to the sulfatase family. Ca(2+) is required as a cofactor. Post-translationally, the conversion to 3-oxoalanine (also known as C-formylglycine, FGly), of a serine or cysteine residue in prokaryotes and of a cysteine residue in eukaryotes, is critical for catalytic activity.

The protein localises to the membrane. The sequence is that of Arylsulfatase H (ARSH) from Homo sapiens (Human).